Here is a 491-residue protein sequence, read N- to C-terminus: Ketol-acid reductoisomerase (NADP(+)) (491 aa).

The KARI N-terminal Rossmann domain maps to 14–208 (LKHLGKCRFM…GSHRAGVLES (195 aa)). NADP(+) contacts are provided by residues 45–48 (CGSQ), R68, and S78. H132 is a catalytic residue. An NADP(+)-binding site is contributed by G158. 2 KARI C-terminal knotted domains span residues 209-344 (SFVA…QAPN) and 345-485 (YQQE…MQNM). D217, E221, E389, and E393 together coordinate Mg(2+). S414 contributes to the substrate binding site.

The protein belongs to the ketol-acid reductoisomerase family. Mg(2+) serves as cofactor.

It catalyses the reaction (2R)-2,3-dihydroxy-3-methylbutanoate + NADP(+) = (2S)-2-acetolactate + NADPH + H(+). The enzyme catalyses (2R,3R)-2,3-dihydroxy-3-methylpentanoate + NADP(+) = (S)-2-ethyl-2-hydroxy-3-oxobutanoate + NADPH + H(+). It participates in amino-acid biosynthesis; L-isoleucine biosynthesis; L-isoleucine from 2-oxobutanoate: step 2/4. Its pathway is amino-acid biosynthesis; L-valine biosynthesis; L-valine from pyruvate: step 2/4. In terms of biological role, involved in the biosynthesis of branched-chain amino acids (BCAA). Catalyzes an alkyl-migration followed by a ketol-acid reduction of (S)-2-acetolactate (S2AL) to yield (R)-2,3-dihydroxy-isovalerate. In the isomerase reaction, S2AL is rearranged via a Mg-dependent methyl migration to produce 3-hydroxy-3-methyl-2-ketobutyrate (HMKB). In the reductase reaction, this 2-ketoacid undergoes a metal-dependent reduction by NADPH to yield (R)-2,3-dihydroxy-isovalerate. The chain is Ketol-acid reductoisomerase (NADP(+)) from Blochmanniella pennsylvanica (strain BPEN).